The chain runs to 269 residues: 4-hydroxy-tetrahydrodipicolinate reductase (269 aa).

Residues 8–13 and Glu-34 each bind NAD(+); that span reads GAAGRM. Arg-35 contacts NADP(+). NAD(+) is bound by residues 98–100 and 122–125; these read GTT and APNY. His-155 acts as the Proton donor/acceptor in catalysis. His-156 lines the (S)-2,3,4,5-tetrahydrodipicolinate pocket. Lys-159 acts as the Proton donor in catalysis. Residue 165 to 166 coordinates (S)-2,3,4,5-tetrahydrodipicolinate; the sequence is GT.

Belongs to the DapB family.

The protein resides in the cytoplasm. The catalysed reaction is (S)-2,3,4,5-tetrahydrodipicolinate + NAD(+) + H2O = (2S,4S)-4-hydroxy-2,3,4,5-tetrahydrodipicolinate + NADH + H(+). The enzyme catalyses (S)-2,3,4,5-tetrahydrodipicolinate + NADP(+) + H2O = (2S,4S)-4-hydroxy-2,3,4,5-tetrahydrodipicolinate + NADPH + H(+). It functions in the pathway amino-acid biosynthesis; L-lysine biosynthesis via DAP pathway; (S)-tetrahydrodipicolinate from L-aspartate: step 4/4. In terms of biological role, catalyzes the conversion of 4-hydroxy-tetrahydrodipicolinate (HTPA) to tetrahydrodipicolinate. In Vibrio parahaemolyticus serotype O3:K6 (strain RIMD 2210633), this protein is 4-hydroxy-tetrahydrodipicolinate reductase.